Here is a 528-residue protein sequence, read N- to C-terminus: Tyrosine--tRNA ligase, cytoplasmic (528 aa).

Methionine 1 carries the post-translational modification N-acetylmethionine. Glycine 2 carries the post-translational modification N-acetylglycine; in Tyrosine--tRNA ligase, cytoplasmic, N-terminally processed. Tyrosine 39 contributes to the L-tyrosine binding site. A trans-resveratrol-binding site is contributed by tyrosine 39. The short motif at 44–52 (TTGKPHVAY) is the 'HIGH' region element. Residues tyrosine 166, glutamine 170, aspartate 173, and glutamine 188 each contribute to the L-tyrosine site. Trans-resveratrol-binding residues include glutamine 170 and aspartate 173. Lysine 197 bears the N6-acetyllysine mark. Serine 205 carries the phosphoserine modification. Lysine 206 is subject to N6-acetyllysine. Positions 222–226 (KMSSS) match the 'KMSKS' region motif. The Nuclear localization signal motif lies at 242–247 (KKKLKK). A disordered region spans residues 339–363 (AAYPDPSKQKPMAKGPAKNSEPEEV). The tRNA-binding domain occupies 364–468 (IPSRLDIRVG…AGSAPGERVF (105 aa)). Phosphoserine is present on serine 386. An N6-acetyllysine mark is found at lysine 474, lysine 482, and lysine 490.

The protein belongs to the class-I aminoacyl-tRNA synthetase family. Homodimer. Interacts (when binding to resveratrol) with PARP1; interaction stimulates the poly-ADP-ribosyltransferase activity of PARP1.

It localises to the cytoplasm. Its subcellular location is the nucleus. The enzyme catalyses tRNA(Tyr) + L-tyrosine + ATP = L-tyrosyl-tRNA(Tyr) + AMP + diphosphate + H(+). Its activity is regulated as follows. Resveratrol strongly inhibits the tyrosine--tRNA ligase activity. Functionally, tyrosine--tRNA ligase that catalyzes the attachment of tyrosine to tRNA(Tyr) in a two-step reaction: tyrosine is first activated by ATP to form Tyr-AMP and then transferred to the acceptor end of tRNA(Tyr). Also acts as a positive regulator of poly-ADP-ribosylation in the nucleus, independently of its tyrosine--tRNA ligase activity. Activity is switched upon resveratrol-binding: resveratrol strongly inhibits the tyrosine--tRNA ligase activity and promotes relocalization to the nucleus, where YARS1 specifically stimulates the poly-ADP-ribosyltransferase activity of PARP1. This Pongo abelii (Sumatran orangutan) protein is Tyrosine--tRNA ligase, cytoplasmic (YARS1).